The following is a 545-amino-acid chain: Glutamyl-tRNA(Gln) amidotransferase subunit B-1, chloroplastic/mitochondrial (545 aa).

This sequence belongs to the GatB/GatE family. GatB subfamily. In terms of assembly, subunit of the heterotrimeric GatCAB amidotransferase (AdT) complex, composed of A, B and C subunits.

The protein resides in the mitochondrion. It is found in the plastid. The protein localises to the chloroplast. It catalyses the reaction L-glutamyl-tRNA(Gln) + L-glutamine + ATP + H2O = L-glutaminyl-tRNA(Gln) + L-glutamate + ADP + phosphate + H(+). Allows the formation of correctly charged Gln-tRNA(Gln) through the transamidation of misacylated Glu-tRNA(Gln) in chloroplasts and mitochondria. The reaction takes place in the presence of glutamine and ATP through an activated gamma-phospho-Glu-tRNA(Gln). In Micromonas pusilla (strain CCMP1545) (Picoplanktonic green alga), this protein is Glutamyl-tRNA(Gln) amidotransferase subunit B-1, chloroplastic/mitochondrial.